Reading from the N-terminus, the 688-residue chain is Elongation factor G (688 aa).

Residues Lys6 to Ile280 enclose the tr-type G domain. Residues Ala15–Thr22, Asp79–His83, and Asn133–Asp136 contribute to the GTP site.

This sequence belongs to the TRAFAC class translation factor GTPase superfamily. Classic translation factor GTPase family. EF-G/EF-2 subfamily.

It localises to the cytoplasm. Functionally, catalyzes the GTP-dependent ribosomal translocation step during translation elongation. During this step, the ribosome changes from the pre-translocational (PRE) to the post-translocational (POST) state as the newly formed A-site-bound peptidyl-tRNA and P-site-bound deacylated tRNA move to the P and E sites, respectively. Catalyzes the coordinated movement of the two tRNA molecules, the mRNA and conformational changes in the ribosome. The polypeptide is Elongation factor G (Ureaplasma parvum serovar 3 (strain ATCC 27815 / 27 / NCTC 11736)).